A 311-amino-acid polypeptide reads, in one-letter code: Putative dihydroorotate dehydrogenase A (fumarate) (311 aa).

Residues Lys45, 69 to 73, and Asn128 contribute to the substrate site; that span reads NSMGL. 45 to 46 serves as a coordination point for FMN; it reads KT. Asn128 is a binding site for FMN. The active-site Nucleophile is Cys131. Lys165 and Val193 together coordinate FMN. A substrate-binding site is contributed by 194-195; that stretch reads NS. FMN is bound by residues Gly220, 248-249, and 270-271; these read GG and GT.

This sequence belongs to the dihydroorotate dehydrogenase family. Type 1 subfamily. As to quaternary structure, homodimer. It depends on FMN as a cofactor.

Its subcellular location is the cytoplasm. The catalysed reaction is (S)-dihydroorotate + fumarate = orotate + succinate. It functions in the pathway pyrimidine metabolism; UMP biosynthesis via de novo pathway. Catalyzes the conversion of dihydroorotate to orotate with fumarate as the electron acceptor. The chain is Putative dihydroorotate dehydrogenase A (fumarate) (pyrD) from Streptococcus pyogenes serotype M3 (strain SSI-1).